A 1663-amino-acid chain; its full sequence is Cortactin-binding protein 2 (1663 aa).

Disordered regions lie at residues 1 to 23, 203 to 222, 367 to 440, 454 to 478, and 498 to 616; these read MATD…AGAA, KKKT…RSTE, GASV…LHPG, GNAN…SPTS, and RFTS…PKPS. A coiled-coil region spans residues 119 to 276; the sequence is KKMQERMSAQ…EQLKRGSDSK (158 aa). Low complexity predominate over residues 386–396; that stretch reads PSTGSTPDPTS. Arg498 carries the asymmetric dimethylarginine modification. Positions 583–593 are enriched in polar residues; sequence TVASTPSSLPQ. ANK repeat units lie at residues 709 to 739, 743 to 772, 776 to 805, 809 to 838, 842 to 871, and 912 to 942; these read GRPT…DINY, DGHS…QVNA, NGFT…NINH, GGQT…NRSV, DGWT…PAHG, and EGWT…EPER. A disordered region spans residues 1449–1482; sequence KGESGAWRKVNTSPRRKSGRFSLPTWNKPDLSTE. Ser1524 is modified (phosphoserine). The tract at residues 1581 to 1663 is disordered; that stretch reads QKEVSPLSSH…KNEHLEKPNK (83 aa). Positions 1582–1599 are enriched in polar residues; sequence KEVSPLSSHQTTECSNSK. A compositionally biased stretch (low complexity) spans 1624–1638; the sequence is SQNTKRSSSSSNTRQ. A compositionally biased stretch (polar residues) spans 1639–1648; sequence IEINNNSKEV. Positions 1653–1663 are enriched in basic and acidic residues; that stretch reads HKNEHLEKPNK.

As to quaternary structure, interacts with CTTN/cortactin SH3 domain. Interacts with STRN, STRN4/zinedin and MOB4/phocein; this interactions mediate the association with the STRIPAK core complex and may regulate dendritic spine distribution of the STRIPAK complex in hippocampal neurons. Activation of glutamate receptors weakens the interaction with STRN and STRN4. Highest expression in brain. Also expressed in kidney, pancreas, lung, heart, liver, skeletal muscle and placenta.

It is found in the cytoplasm. The protein localises to the cell cortex. It localises to the cell projection. Its subcellular location is the dendritic spine. Functionally, regulates the dendritic spine distribution of CTTN/cortactin in hippocampal neurons, and thus controls dendritic spinogenesis and dendritic spine maintenance. Associates with the striatin-interacting phosphatase and kinase (STRIPAK) core complex to regulate dendritic spine distribution of the STRIPAK complex in hippocampal neurons. The chain is Cortactin-binding protein 2 from Homo sapiens (Human).